Reading from the N-terminus, the 353-residue chain is Putative transport protein aq_740 (353 aa).

Helical transmembrane passes span 4–24, 28–48, 60–80, 156–176, 209–229, 240–260, 268–288, and 309–329; these read LSLF…LYLL, FNPI…YGFI, FLVI…FAVI, VYTA…LFFI, VLAV…MGFI, LIWA…AAFV, LFTT…TFLI, and VALF…GVFL.

Belongs to the autoinducer-2 exporter (AI-2E) (TC 2.A.86) family.

The protein localises to the cell membrane. This Aquifex aeolicus (strain VF5) protein is Putative transport protein aq_740.